Consider the following 201-residue polypeptide: Large ribosomal subunit protein uL4 (201 aa).

Residues 46–71 (QKTRAEITGTGKKPWRQKGTGRARAG) are disordered.

Belongs to the universal ribosomal protein uL4 family. As to quaternary structure, part of the 50S ribosomal subunit.

Its function is as follows. One of the primary rRNA binding proteins, this protein initially binds near the 5'-end of the 23S rRNA. It is important during the early stages of 50S assembly. It makes multiple contacts with different domains of the 23S rRNA in the assembled 50S subunit and ribosome. Functionally, forms part of the polypeptide exit tunnel. The protein is Large ribosomal subunit protein uL4 of Shewanella amazonensis (strain ATCC BAA-1098 / SB2B).